We begin with the raw amino-acid sequence, 226 residues long: ATP synthase F(0) complex subunit a (226 aa).

6 consecutive transmembrane segments (helical) span residues 10 to 30 (ITPTLMGLPIIILIIMFPPVI), 68 to 88 (WSLMLASLIIFIGSTNLLGLL), 97 to 117 (QLSMNLGMAIPPWAGAVILGF), 138 to 158 (IPMLVIIETISLFIQPMALAV), 164 to 184 (ITAGHLLMHLIGGATLVLTSI), and 189 to 209 (AMITFIILIMLTILEFAVALI).

It belongs to the ATPase A chain family. Component of the ATP synthase complex composed at least of ATP5F1A/subunit alpha, ATP5F1B/subunit beta, ATP5MC1/subunit c (homooctomer), MT-ATP6/subunit a, MT-ATP8/subunit 8, ATP5ME/subunit e, ATP5MF/subunit f, ATP5MG/subunit g, ATP5MK/subunit k, ATP5MJ/subunit j, ATP5F1C/subunit gamma, ATP5F1D/subunit delta, ATP5F1E/subunit epsilon, ATP5PF/subunit F6, ATP5PB/subunit b, ATP5PD/subunit d, ATP5PO/subunit OSCP. ATP synthase complex consists of a soluble F(1) head domain (subunits alpha(3) and beta(3)) - the catalytic core - and a membrane F(0) domain - the membrane proton channel (subunits c, a, 8, e, f, g, k and j). These two domains are linked by a central stalk (subunits gamma, delta, and epsilon) rotating inside the F1 region and a stationary peripheral stalk (subunits F6, b, d, and OSCP). Interacts with DNAJC30; interaction is direct.

The protein localises to the mitochondrion inner membrane. The enzyme catalyses H(+)(in) = H(+)(out). Its function is as follows. Subunit a, of the mitochondrial membrane ATP synthase complex (F(1)F(0) ATP synthase or Complex V) that produces ATP from ADP in the presence of a proton gradient across the membrane which is generated by electron transport complexes of the respiratory chain. ATP synthase complex consist of a soluble F(1) head domain - the catalytic core - and a membrane F(1) domain - the membrane proton channel. These two domains are linked by a central stalk rotating inside the F(1) region and a stationary peripheral stalk. During catalysis, ATP synthesis in the catalytic domain of F(1) is coupled via a rotary mechanism of the central stalk subunits to proton translocation. With the subunit c (ATP5MC1), forms the proton-conducting channel in the F(0) domain, that contains two crucial half-channels (inlet and outlet) that facilitate proton movement from the mitochondrial intermembrane space (IMS) into the matrix. Protons are taken up via the inlet half-channel and released through the outlet half-channel, following a Grotthuss mechanism. This chain is ATP synthase F(0) complex subunit a, found in Cricetulus griseus (Chinese hamster).